Here is a 254-residue protein sequence, read N- to C-terminus: Protein Thf1 (254 aa).

Positions 182–241 form a coiled coil; the sequence is EEKMKKDLDLYRSNLEKMNQVLEVLEDALAVERQRREKAEAEAKAKTAEATVATETNDEQ. Residues 215-228 are compositionally biased toward basic and acidic residues; the sequence is QRREKAEAEAKAKT. A disordered region spans residues 215 to 254; that stretch reads QRREKAEAEAKAKTAEATVATETNDEQDEQKETSESGSDA.

This sequence belongs to the THF1 family.

May be involved in photosynthetic membrane biogenesis. The polypeptide is Protein Thf1 (Picosynechococcus sp. (strain ATCC 27264 / PCC 7002 / PR-6) (Agmenellum quadruplicatum)).